The chain runs to 506 residues: Nucleoside import ATP-binding protein NupA (506 aa).

ABC transporter domains lie at 7–242 (IQMI…VGRS) and 259–503 (LEIK…VGGN). 39-46 (GENGAGKS) is an ATP binding site.

The protein belongs to the ABC transporter superfamily. In terms of assembly, the complex is composed of two ATP-binding proteins (NupA), two transmembrane proteins (NupB and NupC) and a solute-binding protein (BmpA).

It is found in the cell membrane. In terms of biological role, part of an ABC transporter complex involved in the uptake of all common nucleosides. Responsible for energy coupling to the transport system. The sequence is that of Nucleoside import ATP-binding protein NupA from Lactococcus lactis subsp. cremoris (strain MG1363).